We begin with the raw amino-acid sequence, 122 residues long: Large ribosomal subunit protein uL14 (122 aa).

It belongs to the universal ribosomal protein uL14 family. As to quaternary structure, part of the 50S ribosomal subunit. Forms a cluster with proteins L3 and L19. In the 70S ribosome, L14 and L19 interact and together make contacts with the 16S rRNA in bridges B5 and B8.

Binds to 23S rRNA. Forms part of two intersubunit bridges in the 70S ribosome. This is Large ribosomal subunit protein uL14 from Teredinibacter turnerae (strain ATCC 39867 / T7901).